Reading from the N-terminus, the 507-residue chain is Beta-glucosidase 13 (507 aa).

The signal sequence occupies residues 1-22 (MRTKYFSLLVFIIVLASNEVIA). Residue Q50 coordinates a beta-D-glucoside. N-linked (GlcNAc...) asparagine glycosylation is present at N81. A beta-D-glucoside-binding positions include H154 and 199-200 (NE). E200 functions as the Proton donor in the catalytic mechanism. An intrachain disulfide couples C219 to C227. N226 is a glycosylation site (N-linked (GlcNAc...) asparagine). Y344 lines the a beta-D-glucoside pocket. N-linked (GlcNAc...) asparagine glycosylation occurs at N358. A beta-D-glucoside contacts are provided by residues E414, W459, 466–467 (EW), and F475. The Nucleophile role is filled by E414.

The protein belongs to the glycosyl hydrolase 1 family.

It catalyses the reaction Hydrolysis of terminal, non-reducing beta-D-glucosyl residues with release of beta-D-glucose.. The polypeptide is Beta-glucosidase 13 (Arabidopsis thaliana (Mouse-ear cress)).